Consider the following 263-residue polypeptide: L-aspartate dehydrogenase (263 aa).

Residues Ala120 and Asn186 each coordinate NAD(+). His216 is a catalytic residue.

Belongs to the L-aspartate dehydrogenase family.

It carries out the reaction L-aspartate + NADP(+) + H2O = oxaloacetate + NH4(+) + NADPH + H(+). The catalysed reaction is L-aspartate + NAD(+) + H2O = oxaloacetate + NH4(+) + NADH + H(+). It functions in the pathway cofactor biosynthesis; NAD(+) biosynthesis; iminoaspartate from L-aspartate (dehydrogenase route): step 1/1. Its function is as follows. Specifically catalyzes the NAD or NADP-dependent dehydrogenation of L-aspartate to iminoaspartate. This chain is L-aspartate dehydrogenase, found in Psychrobacter cryohalolentis (strain ATCC BAA-1226 / DSM 17306 / VKM B-2378 / K5).